Reading from the N-terminus, the 441-residue chain is Ribosomal protein uS12 methylthiotransferase RimO (441 aa).

The MTTase N-terminal domain maps to 8 to 118; that stretch reads PKIGFVSLGC…VLEHVHHYVP (111 aa). Positions 17, 53, 82, 150, 154, and 157 each coordinate [4Fe-4S] cluster. Positions 136–373 constitute a Radical SAM core domain; it reads LTPRHYAYLK…MQLQQQISAE (238 aa). The 66-residue stretch at 376–441 folds into the TRAM domain; it reads QEKVGKEILV…DEYDLWGSRV (66 aa).

It belongs to the methylthiotransferase family. RimO subfamily. [4Fe-4S] cluster serves as cofactor.

Its subcellular location is the cytoplasm. It carries out the reaction L-aspartate(89)-[ribosomal protein uS12]-hydrogen + (sulfur carrier)-SH + AH2 + 2 S-adenosyl-L-methionine = 3-methylsulfanyl-L-aspartate(89)-[ribosomal protein uS12]-hydrogen + (sulfur carrier)-H + 5'-deoxyadenosine + L-methionine + A + S-adenosyl-L-homocysteine + 2 H(+). Its function is as follows. Catalyzes the methylthiolation of an aspartic acid residue of ribosomal protein uS12. The protein is Ribosomal protein uS12 methylthiotransferase RimO of Escherichia fergusonii (strain ATCC 35469 / DSM 13698 / CCUG 18766 / IAM 14443 / JCM 21226 / LMG 7866 / NBRC 102419 / NCTC 12128 / CDC 0568-73).